Consider the following 177-residue polypeptide: Inorganic pyrophosphatase (177 aa).

Residues Lys30, Arg44, and Tyr56 each coordinate substrate. 3 residues coordinate Mg(2+): Asp66, Asp71, and Asp103. A substrate-binding site is contributed by Tyr142.

Belongs to the PPase family. As to quaternary structure, homohexamer. The cofactor is Mg(2+).

The protein localises to the cytoplasm. The enzyme catalyses diphosphate + H2O = 2 phosphate + H(+). Catalyzes the hydrolysis of inorganic pyrophosphate (PPi) forming two phosphate ions. This chain is Inorganic pyrophosphatase, found in Caulobacter vibrioides (strain ATCC 19089 / CIP 103742 / CB 15) (Caulobacter crescentus).